The sequence spans 539 residues: 3-methylmercaptopropionyl-CoA ligase (539 aa).

A Mg(2+)-binding site is contributed by Thr-185. Residues His-231, Gly-303, His-324, Ala-325, and Ser-329 each coordinate ATP. Residue Glu-330 participates in Mg(2+) binding. 4 residues coordinate ATP: Gln-359, Asp-417, Arg-432, and Lys-523.

Belongs to the ATP-dependent AMP-binding enzyme family. Homodimer. Mg(2+) is required as a cofactor.

The catalysed reaction is 3-(methylsulfanyl)propanoate + ATP + CoA = 3-(methylsulfanyl)propanoyl-CoA + AMP + diphosphate. Its pathway is lipid metabolism; fatty acid metabolism. With respect to regulation, activated by LiCl and NH(4)Cl. Inhibited by dimethylsulfoniopropionate (DMSP). MMPA concentrations above 2 mM relieve the DMSP inhibition and 80% of activity is regained at an MMPA concentration of 8 mM. Functionally, involved in the assimilation of dimethylsulphoniopropionate (DMSP), an important compound in the fixation of carbon in marine phytoplankton. Catalyzes the ATP-dependent ligation of methylmercaptopropionate (MMPA) and CoA to yield methylmercaptopropionate-CoA (MMPA-CoA). It is also active with short-chain-fatty-acid (carboxylic acids up to six carbons in length). The protein is 3-methylmercaptopropionyl-CoA ligase of Ruegeria pomeroyi (strain ATCC 700808 / DSM 15171 / DSS-3) (Silicibacter pomeroyi).